Here is a 210-residue protein sequence, read N- to C-terminus: 3 beta-hydroxysteroid dehydrogenase/Delta 5--&gt;4-isomerase (210 aa).

Tyr-29 functions as the Proton acceptor in the catalytic mechanism. Lys-33 is a binding site for NAD(+).

It belongs to the 3-beta-HSD family.

The enzyme catalyses a 3beta-hydroxy-Delta(5)-steroid + NAD(+) = a 3-oxo-Delta(5)-steroid + NADH + H(+). It carries out the reaction a 3-oxo-Delta(5)-steroid = a 3-oxo-Delta(4)-steroid. It functions in the pathway lipid metabolism; steroid biosynthesis. Catalyzes the oxidative conversion of Delta(5)-ene-3-beta-hydroxy steroid, and the oxidative conversion of ketosteroids. The 3-beta-HSD enzymatic system plays a crucial role in the biosynthesis of all classes of hormonal steroids. During viral infection, steroid production contributes to virulence by inhibiting the host inflammatory response. This is 3 beta-hydroxysteroid dehydrogenase/Delta 5--&gt;4-isomerase (OPG174) from Variola virus (isolate Human/India/Ind3/1967) (VARV).